The following is a 378-amino-acid chain: UDP-N-acetylenolpyruvoylglucosamine reductase (378 aa).

In terms of domain architecture, FAD-binding PCMH-type spans 15–185; the sequence is VGGTPERLLE…LSVDLELADH (171 aa). The active site involves arginine 163. Serine 248 serves as the catalytic Proton donor. The active site involves glutamate 370.

The protein belongs to the MurB family. FAD is required as a cofactor.

It is found in the cytoplasm. It carries out the reaction UDP-N-acetyl-alpha-D-muramate + NADP(+) = UDP-N-acetyl-3-O-(1-carboxyvinyl)-alpha-D-glucosamine + NADPH + H(+). Its pathway is cell wall biogenesis; peptidoglycan biosynthesis. In terms of biological role, cell wall formation. This Leifsonia xyli subsp. xyli (strain CTCB07) protein is UDP-N-acetylenolpyruvoylglucosamine reductase.